The primary structure comprises 147 residues: Diaminohydroxyphosphoribosylamino-pyrimidine deaminase (147 aa).

The 122-residue stretch at 1 to 122 (MKDRFYMTRA…LYLRKKGISV (122 aa)) folds into the CMP/dCMP-type deaminase domain. Residue His-50 participates in Zn(2+) binding. Glu-52 (proton donor) is an active-site residue. Zn(2+) is bound by residues Cys-75 and Cys-84.

The protein belongs to the cytidine and deoxycytidylate deaminase family. The cofactor is Zn(2+).

The catalysed reaction is 2,5-diamino-6-hydroxy-4-(5-phosphoribosylamino)-pyrimidine + H2O + H(+) = 5-amino-6-(5-phospho-D-ribosylamino)uracil + NH4(+). The protein operates within cofactor biosynthesis; riboflavin biosynthesis; 5-amino-6-(D-ribitylamino)uracil from GTP: step 2/4. This chain is Diaminohydroxyphosphoribosylamino-pyrimidine deaminase (ribD1), found in Buchnera aphidicola subsp. Schizaphis graminum (strain Sg).